The chain runs to 448 residues: Exodeoxyribonuclease 7 large subunit (448 aa).

This sequence belongs to the XseA family. Heterooligomer composed of large and small subunits.

It is found in the cytoplasm. It catalyses the reaction Exonucleolytic cleavage in either 5'- to 3'- or 3'- to 5'-direction to yield nucleoside 5'-phosphates.. Its function is as follows. Bidirectionally degrades single-stranded DNA into large acid-insoluble oligonucleotides, which are then degraded further into small acid-soluble oligonucleotides. The protein is Exodeoxyribonuclease 7 large subunit of Hamiltonella defensa subsp. Acyrthosiphon pisum (strain 5AT).